The sequence spans 217 residues: Ribonuclease HII (217 aa).

The RNase H type-2 domain occupies Arg-27–Cys-216. Positions 33, 34, and 125 each coordinate a divalent metal cation.

The protein belongs to the RNase HII family. Requires Mn(2+) as cofactor. It depends on Mg(2+) as a cofactor.

It localises to the cytoplasm. The catalysed reaction is Endonucleolytic cleavage to 5'-phosphomonoester.. In terms of biological role, endonuclease that specifically degrades the RNA of RNA-DNA hybrids. The polypeptide is Ribonuclease HII (Geobacter sulfurreducens (strain ATCC 51573 / DSM 12127 / PCA)).